The following is a 99-amino-acid chain: Small ribosomal subunit protein bS6c (99 aa).

It belongs to the bacterial ribosomal protein bS6 family.

It is found in the plastid. Its subcellular location is the chloroplast. Binds together with bS18 to 16S ribosomal RNA. In Cyanidioschyzon merolae (strain NIES-3377 / 10D) (Unicellular red alga), this protein is Small ribosomal subunit protein bS6c.